The chain runs to 1059 residues: Isoleucine--tRNA ligase (1059 aa).

Positions 47–57 (PYTTGHIHLGT) match the 'HIGH' region motif. Positions 591-595 (KMSKS) match the 'KMSKS' region motif. Lysine 594 is an ATP binding site.

Belongs to the class-I aminoacyl-tRNA synthetase family. IleS type 2 subfamily. As to quaternary structure, monomer. Zn(2+) serves as cofactor.

It is found in the cytoplasm. The catalysed reaction is tRNA(Ile) + L-isoleucine + ATP = L-isoleucyl-tRNA(Ile) + AMP + diphosphate. In terms of biological role, catalyzes the attachment of isoleucine to tRNA(Ile). As IleRS can inadvertently accommodate and process structurally similar amino acids such as valine, to avoid such errors it has two additional distinct tRNA(Ile)-dependent editing activities. One activity is designated as 'pretransfer' editing and involves the hydrolysis of activated Val-AMP. The other activity is designated 'posttransfer' editing and involves deacylation of mischarged Val-tRNA(Ile). The polypeptide is Isoleucine--tRNA ligase (Methanoculleus marisnigri (strain ATCC 35101 / DSM 1498 / JR1)).